Reading from the N-terminus, the 377-residue chain is Modification methylase CviBIII (377 aa).

It belongs to the N(4)/N(6)-methyltransferase family.

It catalyses the reaction a 2'-deoxyadenosine in DNA + S-adenosyl-L-methionine = an N(6)-methyl-2'-deoxyadenosine in DNA + S-adenosyl-L-homocysteine + H(+). A gamma subtype methylase that recognizes the double-stranded sequence 5'-TCGA-3' and methylates A-4 on both strands. The polypeptide is Modification methylase CviBIII (CVIBIIIM) (Paramecium bursaria Chlorella virus NC1A (PBCV-NC1A)).